Here is a 179-residue protein sequence, read N- to C-terminus: Large ribosomal subunit protein uL5 (179 aa).

This sequence belongs to the universal ribosomal protein uL5 family. As to quaternary structure, part of the 50S ribosomal subunit; part of the 5S rRNA/L5/L18/L25 subcomplex. Contacts the 5S rRNA and the P site tRNA. Forms a bridge to the 30S subunit in the 70S ribosome.

Its function is as follows. This is one of the proteins that bind and probably mediate the attachment of the 5S RNA into the large ribosomal subunit, where it forms part of the central protuberance. In the 70S ribosome it contacts protein S13 of the 30S subunit (bridge B1b), connecting the 2 subunits; this bridge is implicated in subunit movement. Contacts the P site tRNA; the 5S rRNA and some of its associated proteins might help stabilize positioning of ribosome-bound tRNAs. The protein is Large ribosomal subunit protein uL5 of Dictyoglomus thermophilum (strain ATCC 35947 / DSM 3960 / H-6-12).